The primary structure comprises 345 residues: Fructose-1,6-bisphosphatase class 1 1 (345 aa).

4 residues coordinate Mg(2+): E90, D109, L111, and D112. Residues 112–115 (DGSS) and N200 each bind substrate. Mg(2+) is bound at residue E272.

Belongs to the FBPase class 1 family. In terms of assembly, homotetramer. Requires Mg(2+) as cofactor.

It localises to the cytoplasm. It carries out the reaction beta-D-fructose 1,6-bisphosphate + H2O = beta-D-fructose 6-phosphate + phosphate. Its pathway is carbohydrate biosynthesis; gluconeogenesis. This Nitrobacter hamburgensis (strain DSM 10229 / NCIMB 13809 / X14) protein is Fructose-1,6-bisphosphatase class 1 1.